Consider the following 562-residue polypeptide: Membrane protein insertase YidC (562 aa).

A helical transmembrane segment spans residues glutamine 4–glutamate 24. Residues threonine 33–aspartate 71 are disordered. Over residues glutamate 35–aspartate 58 the composition is skewed to acidic residues. Over residues threonine 61–aspartate 71 the composition is skewed to basic and acidic residues. A run of 4 helical transmembrane segments spans residues methionine 330 to leucine 350, isoleucine 356 to tyrosine 376, leucine 426 to leucine 446, and isoleucine 499 to valine 519.

The protein belongs to the OXA1/ALB3/YidC family. Type 1 subfamily. As to quaternary structure, interacts with the Sec translocase complex via SecD. Specifically interacts with transmembrane segments of nascent integral membrane proteins during membrane integration.

It is found in the cell inner membrane. Required for the insertion and/or proper folding and/or complex formation of integral membrane proteins into the membrane. Involved in integration of membrane proteins that insert both dependently and independently of the Sec translocase complex, as well as at least some lipoproteins. Aids folding of multispanning membrane proteins. The sequence is that of Membrane protein insertase YidC from Alkalilimnicola ehrlichii (strain ATCC BAA-1101 / DSM 17681 / MLHE-1).